An 824-amino-acid chain; its full sequence is Kinesin-like protein KIFC3 (824 aa).

The tract at residues 27–79 (EPKPGMARPAPASPAARPFPHTGQGRLRTGRGKDILPSGEEDSTSRTAARPSL) is disordered. The span at 33 to 46 (ARPAPASPAARPFP) shows a compositional bias: low complexity. Coiled-coil stretches lie at residues 100-360 (LTVQ…ENLA) and 393-430 (LLQE…LQLR). The 324-residue stretch at 443-766 (NIRVIARVRP…LRFAERVRSV (324 aa)) folds into the Kinesin motor domain. 526–533 (GQTGAGKT) is a binding site for ATP. The segment at 771–824 (GSRRTELGSWSSQEHLEWEPACQTPQPTARAHSAPGSGTSSRPGSIRRKLQPSA) is disordered. A phosphoserine mark is found at serine 811 and serine 815. Positions 815 to 824 (SIRRKLQPSA) are enriched in basic residues.

Belongs to the TRAFAC class myosin-kinesin ATPase superfamily. Kinesin family. As to quaternary structure, interacts with annexin XIIIB. As to expression, predominant expression in the kidney, testis and ovary. Also expressed in brain, heart, liver, lung and uterus.

The protein localises to the cytoplasm. It localises to the cytoskeleton. Its subcellular location is the cytoplasmic vesicle membrane. It is found in the cell junction. The protein resides in the adherens junction. The protein localises to the microtubule organizing center. It localises to the centrosome. Functionally, minus-end microtubule-dependent motor protein. Involved in apically targeted transport. Required for zonula adherens maintenance. This Mus musculus (Mouse) protein is Kinesin-like protein KIFC3 (Kifc3).